Here is a 793-residue protein sequence, read N- to C-terminus: MFNQSKQKPTMKLMWQAWLIYTALAAHLPEEQALRQACLSCDATQSCNCSFMGLDFIPPGLTGKITVLNLAHNRIKLIRTHDLQKAVNLRTLLLQSNQISSIDEDSFGSQGKLELLDLSNNSLAHLSPVWFGPLFSLQHLRIQGNSYSDLGESSPFSSLRNLSSLHLGNPQFSIIRQGNFEGIVFLNTLRIDGDNLSQYEPGSLKSIRKINHMIISIRRIDVFSAVIRDLLHSAIWLEVREIKLDIENEKLVQNSTLPLTIQKLTFTGASFTDKYISQIAVLLKEIRSLRELEAIDCVLEGKGAWDMTEIARSKQSSIETLSITNMTILDFYLFFDLEGIETQVGKLKRLSIASSKVFMVPCRLARYFSSLLYLDFHDNLLVNNRLGETICEDAWPSLQTLNLSKNSLKSLKQAARYISNLHKLINLDISENNFGEIPDMCEWPENLKYLNLSSTQIPKLTTCIPSTLEVLDVSANNLQDFGLQLPFLKELYLTKNHLKTLPEATDIPNLVAMSISRNKLNSFSKEEFESFKQMELLDASANNFICSCEFLSFIHHEAGIAQVLVGWPESYICDSPLTVRGAQVGSVQLSLMECHRSLLVSLICTLVFLFILILVVVGYKYHAVWYMRMTWAWLQAKRKPKRAPTKDICYDAFVSYSENDSNWVENIMVQQLEQACPPFRLCLHKRDFVPGKWIVDNIIDSIEKSHKTLFVLSEHFVQSEWCKYELDFSHFRLFDENNDVAILILLEPIQSQAIPKRFCKLRKIMNTKTYLEWPPDEEQQQMFWENLKAALKS.

Positions Met1 to Ala25 are cleaved as a signal peptide. The Extracellular portion of the chain corresponds to Ala26 to Ser597. Cys41 and Cys47 are oxidised to a cystine. Asn48 carries an N-linked (GlcNAc...) asparagine glycan. LRR repeat units lie at residues Lys64–Lys85, Asn88–Ser109, Lys112–Pro133, Ser136–Ser157, Asn161–Gly182, and Phe185–Ser206. Residue Asn120 is glycosylated (N-linked (GlcNAc...) asparagine). N-linked (GlcNAc...) asparagine glycans are attached at residues Asn161, Asn195, Asn254, and Asn325. A disulfide bridge links Cys362 with Cys391. 7 LRR repeats span residues Ser370 to Cys391, Ser397 to Ile418, Lys423 to Pro444, Asn446 to Thr467, Leu468 to Pro486, Phe487 to Pro508, and Asn509 to Ser530. N-linked (GlcNAc...) asparagine glycosylation is present at Asn402. The cysteines at positions 441 and 463 are disulfide-linked. An N-linked (GlcNAc...) asparagine glycan is attached at Asn451. The LRRCT domain maps to Asn542–Arg596. The helical transmembrane segment at Leu598–Gly618 threads the bilayer. Topologically, residues Tyr619–Ser793 are cytoplasmic. Residues Ile648 to Leu791 enclose the TIR domain.

The protein belongs to the Toll-like receptor family. Binds MYD88 (via TIR domain). In terms of processing, N-glycosylated. TLR2-1 is more heavily glycosylated than TLR2-2. In terms of tissue distribution, highly expressed in ovary. Detected at lower levels in heart, lung, gizzard and testis.

It is found in the membrane. Functionally, participates in the innate immune response to microbial agents. Acts via MYD88 and TRAF6, leading to NF-kappa-B activation, cytokine secretion and the inflammatory response. Does not respond to LPS and responds with less ability than TLR2-2 to mycoplasmal macrophage-activating lipopeptide-2kD (MALP-2). This chain is Toll-like receptor 2 type-1 (TLR2-1), found in Gallus gallus (Chicken).